A 94-amino-acid polypeptide reads, in one-letter code: Putative regulatory protein LEPBI_I0950 (94 aa).

The protein belongs to the RemA family.

The chain is Putative regulatory protein LEPBI_I0950 from Leptospira biflexa serovar Patoc (strain Patoc 1 / ATCC 23582 / Paris).